A 103-amino-acid polypeptide reads, in one-letter code: N(4)-acetylcytidine amidohydrolase (103 aa).

The ASCH domain occupies 6 to 92 (TFFERFEPGI…VIQEIYPGLE (87 aa)). Residue lysine 20 is the Proton acceptor of the active site. Residue threonine 23 is the Nucleophile of the active site. The active-site Proton donor is the glutamate 73.

Belongs to the N(4)-acetylcytidine amidohydrolase family.

It catalyses the reaction N(4)-acetylcytidine + H2O = cytidine + acetate + H(+). The catalysed reaction is N(4)-acetyl-2'-deoxycytidine + H2O = 2'-deoxycytidine + acetate + H(+). It carries out the reaction N(4)-acetylcytosine + H2O = cytosine + acetate + H(+). Its function is as follows. Catalyzes the hydrolysis of N(4)-acetylcytidine (ac4C). This chain is N(4)-acetylcytidine amidohydrolase, found in Shewanella sp. (strain MR-7).